Here is a 383-residue protein sequence, read N- to C-terminus: MSELEFVTKHRRHLHQHPELSLHEFETTKYITQFLEELGVSYERPLETGAIAYLNGNSDHTIAFRADIDALPIFEENDVDYRSQTDNVMHACGHDGHTTALMLFVKRCKEMFDKGTLPHNVVFIFQPAEETGGGANRLIKAGAFNNYPIEAVFGIHVNPFADEGQVVIRDEEITASATEYRFFLKGLSSHVADKEQGHSCGEALLHVLNQVGQIQQYHLNGLKRNIVHMGHFEAGEAINTVASHGYLEGTIRTYDPNDLNVVKTQMHKIAESVSLLFNVDCEVKFEEGYPPTMNSPKLRASVEQAINAANLEVIDKPLPFLFGEDFSFYGQQLAPAYFAFVGTRNEDKGFVTGLHTSHLNFDEKVLIYVANYYEQLLMHYGEE.

It belongs to the peptidase M20 family.

This is an uncharacterized protein from Staphylococcus haemolyticus (strain JCSC1435).